The sequence spans 124 residues: Large ribosomal subunit protein bL12 (124 aa).

The protein belongs to the bacterial ribosomal protein bL12 family. Homodimer. Part of the ribosomal stalk of the 50S ribosomal subunit. Forms a multimeric L10(L12)X complex, where L10 forms an elongated spine to which 2 to 4 L12 dimers bind in a sequential fashion. Binds GTP-bound translation factors.

Functionally, forms part of the ribosomal stalk which helps the ribosome interact with GTP-bound translation factors. Is thus essential for accurate translation. This is Large ribosomal subunit protein bL12 from Cupriavidus metallidurans (strain ATCC 43123 / DSM 2839 / NBRC 102507 / CH34) (Ralstonia metallidurans).